The following is a 429-amino-acid chain: DNA primase DnaG (429 aa).

Residues 172 to 246 form the Toprim domain; the sequence is DSIIVVEGRN…DVDFIARAPP (75 aa). Positions 178, 220, and 222 each coordinate Mg(2+). A disordered region spans residues 287–322; that stretch reads RNTKELEERQGNELKNERPEKINENEESEKNVELKE.

Belongs to the archaeal DnaG primase family. In terms of assembly, forms a ternary complex with MCM helicase and DNA. Component of the archaeal exosome complex. Mg(2+) is required as a cofactor.

The catalysed reaction is ssDNA + n NTP = ssDNA/pppN(pN)n-1 hybrid + (n-1) diphosphate.. Its function is as follows. RNA polymerase that catalyzes the synthesis of short RNA molecules used as primers for DNA polymerase during DNA replication. Also part of the exosome, which is a complex involved in RNA degradation. Acts as a poly(A)-binding protein that enhances the interaction between heteromeric, adenine-rich transcripts and the exosome. This chain is DNA primase DnaG, found in Picrophilus torridus (strain ATCC 700027 / DSM 9790 / JCM 10055 / NBRC 100828 / KAW 2/3).